The primary structure comprises 307 residues: Urease accessory protein UreD (307 aa).

Belongs to the UreD family. As to quaternary structure, ureD, UreF and UreG form a complex that acts as a GTP-hydrolysis-dependent molecular chaperone, activating the urease apoprotein by helping to assemble the nickel containing metallocenter of UreC. The UreE protein probably delivers the nickel.

It is found in the cytoplasm. Its function is as follows. Required for maturation of urease via the functional incorporation of the urease nickel metallocenter. This Prochlorococcus marinus (strain NATL1A) protein is Urease accessory protein UreD.